The following is a 191-amino-acid chain: Ribonuclease HII (191 aa).

One can recognise an RNase H type-2 domain in the interval 16 to 191 (INLIGIDEAG…KLHRKSFKLL (176 aa)). Asp22, Glu23, and Asp110 together coordinate a divalent metal cation.

The protein belongs to the RNase HII family. It depends on Mn(2+) as a cofactor. Requires Mg(2+) as cofactor.

Its subcellular location is the cytoplasm. It carries out the reaction Endonucleolytic cleavage to 5'-phosphomonoester.. In terms of biological role, endonuclease that specifically degrades the RNA of RNA-DNA hybrids. This is Ribonuclease HII from Campylobacter jejuni subsp. jejuni serotype O:6 (strain 81116 / NCTC 11828).